The following is a 317-amino-acid chain: Transaldolase (317 aa).

The active-site Schiff-base intermediate with substrate is K132.

It belongs to the transaldolase family. Type 1 subfamily. Homodimer.

It is found in the cytoplasm. The enzyme catalyses D-sedoheptulose 7-phosphate + D-glyceraldehyde 3-phosphate = D-erythrose 4-phosphate + beta-D-fructose 6-phosphate. Its pathway is carbohydrate degradation; pentose phosphate pathway; D-glyceraldehyde 3-phosphate and beta-D-fructose 6-phosphate from D-ribose 5-phosphate and D-xylulose 5-phosphate (non-oxidative stage): step 2/3. Transaldolase is important for the balance of metabolites in the pentose-phosphate pathway. The polypeptide is Transaldolase (Yersinia pseudotuberculosis serotype O:3 (strain YPIII)).